The chain runs to 346 residues: Dihydroorotase (346 aa).

Zn(2+)-binding residues include H17 and H19. Residues 19 to 21 (HLR) and N45 each bind substrate. K103, H140, and H178 together coordinate Zn(2+). The residue at position 103 (K103) is an N6-carboxylysine. H140 lines the substrate pocket. Residue L223 coordinates substrate. D251 contacts Zn(2+). D251 is a catalytic residue. Substrate is bound by residues H255 and A267.

The protein belongs to the metallo-dependent hydrolases superfamily. DHOase family. Class II DHOase subfamily. As to quaternary structure, homodimer. It depends on Zn(2+) as a cofactor.

It carries out the reaction (S)-dihydroorotate + H2O = N-carbamoyl-L-aspartate + H(+). It functions in the pathway pyrimidine metabolism; UMP biosynthesis via de novo pathway; (S)-dihydroorotate from bicarbonate: step 3/3. Functionally, catalyzes the reversible cyclization of carbamoyl aspartate to dihydroorotate. This chain is Dihydroorotase, found in Synechococcus sp. (strain RCC307).